A 1066-amino-acid polypeptide reads, in one-letter code: Vinculin (1066 aa).

Residues Met-1–Phe-835 form an N-terminal globular head region. Phosphoserine is present on Ser-97. Residues Met-168–Ala-208 form a talin-interaction region. Lys-173 is subject to N6-acetyllysine. Tandem repeats lie at residues Ala-259 to Asn-369, Ala-370 to Arg-479, and Ala-480 to Glu-589. The interval Ala-259–Glu-589 is 3 X 112 AA tandem repeats. A phosphoserine mark is found at Ser-260, Ser-272, Ser-275, Ser-290, Ser-346, and Ser-434. N6-acetyllysine is present on Lys-496. The residue at position 537 (Tyr-537) is a Phosphotyrosine. Phosphoserine is present on residues Ser-574, Ser-579, and Ser-600. A phosphothreonine mark is found at Thr-604 and Thr-672. A Phosphoserine modification is found at Ser-721. Positions Met-741–Leu-764 are interaction with ACTN4. Phosphoserine occurs at positions 795 and 809. Tyr-822 is subject to Phosphotyrosine. A linker (Pro-rich) region spans residues Gln-836–Pro-878. Positions Glu-857–Glu-887 are disordered. A compositionally biased stretch (pro residues) spans Pro-860–Pro-876. Residues Glu-879–Gln-1066 form a C-terminal tail region. 2 facilitates phospholipid membrane insertion regions span residues Arg-935–Arg-978 and Ala-1052–Gln-1066. The residue at position 1065 (Tyr-1065) is a Phosphotyrosine; by SRC-type Tyr-kinases.

The protein belongs to the vinculin/alpha-catenin family. As to quaternary structure, exhibits self-association properties. Part of a complex composed of THSD1, PTK2/FAK1, TLN1 and VCL. Interacts with APBB1IP, NRAP and TLN1. Interacts with CTNNB1 and this interaction is necessary for its localization to the cell-cell junctions and for its function in regulating cell surface expression of E-cadherin. Interacts with SORBS1. Interacts with SYNM. Interacts with CTNNA1. Binds to ACTN4; this interaction triggers conformational changes. Interacts with FLII. Post-translationally, phosphorylated; on serines, threonines and tyrosines. Phosphorylation on Tyr-1065 in activated platelets affects head-tail interactions and cell spreading but has no effect on actin binding nor on localization to focal adhesion plaques. Acetylated; mainly by myristic acid but also by a small amount of palmitic acid.

The protein localises to the cell membrane. Its subcellular location is the cell junction. It localises to the adherens junction. The protein resides in the focal adhesion. It is found in the cytoplasm. The protein localises to the cytoskeleton. Its subcellular location is the sarcolemma. It localises to the cell projection. The protein resides in the podosome. Actin filament (F-actin)-binding protein involved in cell-matrix adhesion and cell-cell adhesion. Regulates cell-surface E-cadherin expression and potentiates mechanosensing by the E-cadherin complex. May also play important roles in cell morphology and locomotion. The sequence is that of Vinculin from Rattus norvegicus (Rat).